The sequence spans 161 residues: Small ribosomal subunit protein uS9 (161 aa).

This sequence belongs to the universal ribosomal protein uS9 family.

In Bartonella bacilliformis (strain ATCC 35685 / KC583 / Herrer 020/F12,63), this protein is Small ribosomal subunit protein uS9.